Reading from the N-terminus, the 301-residue chain is Pyridoxal 5'-phosphate synthase subunit PdxS (301 aa).

Asp31 provides a ligand contact to D-ribose 5-phosphate. Lys88 (schiff-base intermediate with D-ribose 5-phosphate) is an active-site residue. Gly160 contributes to the D-ribose 5-phosphate binding site. Arg172 contributes to the D-glyceraldehyde 3-phosphate binding site. D-ribose 5-phosphate contacts are provided by residues Gly221 and 242–243 (GS). Positions 273–301 (EIAKSPGKGMKGQANETLPEEEKLQDRGI) are disordered. Basic and acidic residues predominate over residues 292-301 (EEEKLQDRGI).

It belongs to the PdxS/SNZ family. As to quaternary structure, in the presence of PdxT, forms a dodecamer of heterodimers.

It catalyses the reaction aldehydo-D-ribose 5-phosphate + D-glyceraldehyde 3-phosphate + L-glutamine = pyridoxal 5'-phosphate + L-glutamate + phosphate + 3 H2O + H(+). Its pathway is cofactor biosynthesis; pyridoxal 5'-phosphate biosynthesis. In terms of biological role, catalyzes the formation of pyridoxal 5'-phosphate from ribose 5-phosphate (RBP), glyceraldehyde 3-phosphate (G3P) and ammonia. The ammonia is provided by the PdxT subunit. Can also use ribulose 5-phosphate and dihydroxyacetone phosphate as substrates, resulting from enzyme-catalyzed isomerization of RBP and G3P, respectively. The polypeptide is Pyridoxal 5'-phosphate synthase subunit PdxS (Natronomonas pharaonis (strain ATCC 35678 / DSM 2160 / CIP 103997 / JCM 8858 / NBRC 14720 / NCIMB 2260 / Gabara) (Halobacterium pharaonis)).